The chain runs to 759 residues: Protein MTSS 1 (759 aa).

One can recognise an IMD domain in the interval 1-254; it reads MEAVIEKECS…EQVILDLKGS (254 aa). A coiled-coil region spans residues 108-157; sequence LQEQMEEWKKVANQLDKDHAKEYKKARQEIKNKSSDTLKLQKKAKKVDAQ. A disordered region spans residues 259–309; it reads SYQTPPSSPSTTMSRKSSVCSSLNSVNSSDSRSSGSHSHSPSSHYRYRSSN. At T262 the chain carries Phosphothreonine. Phosphoserine occurs at positions 265, 266, 275, and 326. Residues 331–354 are disordered; sequence QDAFQSKSPSPMPPEAANQLSNGF. Residue T429 is modified to Phosphothreonine. Disordered stretches follow at residues 431 to 472 and 569 to 759; these read QRRK…AATR and KRPA…PRFS. Position 607 is a phosphothreonine (T607). Positions 612-627 are enriched in low complexity; it reads PIPIKTPVIPVKTPTV. Residues S648 and S651 each carry the phosphoserine modification. Residues 660–670 show a composition bias toward polar residues; sequence GVSNIPSSLWS. Pro residues predominate over residues 675-685; the sequence is VNPPLPGPKPS. One can recognise a WH2 domain in the interval 731 to 748; the sequence is QGEDMLNAIRRGVKLKKT.

Belongs to the MTSS family. As to quaternary structure, binds to actin. Strongly expressed in the developing neurons and skeletal and cardiac muscles in embryos. Strongly expressed also in liver, outer layers of the kidney, and in the Purkinje cells of the brain.

It localises to the cytoplasm. It is found in the cytoskeleton. Inhibits the nucleation of actin filaments in vitro. This chain is Protein MTSS 1, found in Mus musculus (Mouse).